We begin with the raw amino-acid sequence, 321 residues long: GTP 3',8-cyclase (321 aa).

In terms of domain architecture, Radical SAM core spans 5–227 (SYDRVVDYLR…DEGYDGASPS (223 aa)). Residue Arg-14 participates in GTP binding. The [4Fe-4S] cluster site is built by Cys-21 and Cys-25. An S-adenosyl-L-methionine-binding site is contributed by Tyr-27. Cys-28 lines the [4Fe-4S] cluster pocket. Arg-64 contacts GTP. S-adenosyl-L-methionine is bound at residue Gly-68. Thr-95 serves as a coordination point for GTP. Residue Ser-119 participates in S-adenosyl-L-methionine binding. Residue Lys-155 participates in GTP binding. Met-189 is a binding site for S-adenosyl-L-methionine. [4Fe-4S] cluster is bound by residues Cys-249 and Cys-252. Residue 254-256 (RIR) participates in GTP binding. Cys-266 contacts [4Fe-4S] cluster.

This sequence belongs to the radical SAM superfamily. MoaA family. Monomer and homodimer. [4Fe-4S] cluster serves as cofactor.

It catalyses the reaction GTP + AH2 + S-adenosyl-L-methionine = (8S)-3',8-cyclo-7,8-dihydroguanosine 5'-triphosphate + 5'-deoxyadenosine + L-methionine + A + H(+). It functions in the pathway cofactor biosynthesis; molybdopterin biosynthesis. Catalyzes the cyclization of GTP to (8S)-3',8-cyclo-7,8-dihydroguanosine 5'-triphosphate. This chain is GTP 3',8-cyclase, found in Sulfurimonas denitrificans (strain ATCC 33889 / DSM 1251) (Thiomicrospira denitrificans (strain ATCC 33889 / DSM 1251)).